An 854-amino-acid polypeptide reads, in one-letter code: Glucans biosynthesis glucosyltransferase H (854 aa).

Transmembrane regions (helical) follow at residues 155-175 (ILLVLTLFQTAIATWYMKTIL), 209-229 (ILVLFAVLFCWVSAGFWTALM), 528-548 (VFLTGVMSYLSAPLWFMFLML), 583-603 (IALFSTTLVLLFLPKLLSVIL), 619-639 (FISLLLEMLFSVLLAPVRMLF), 671-691 (FVRHGSQLILGLVWAIGMAWL), and 695-715 (FLWWLAPIVFSLILSPFVSVY).

It belongs to the glycosyltransferase 2 family. OpgH subfamily.

The protein resides in the cell inner membrane. It participates in glycan metabolism; osmoregulated periplasmic glucan (OPG) biosynthesis. Functionally, involved in the biosynthesis of osmoregulated periplasmic glucans (OPGs). The polypeptide is Glucans biosynthesis glucosyltransferase H (Pectobacterium carotovorum subsp. carotovorum (strain PC1)).